Reading from the N-terminus, the 116-residue chain is Ferredoxin (116 aa).

2 consecutive 4Fe-4S ferredoxin-type domains span residues 2-31 and 35-64; these read TYVVTDECVKCKYTDCVEVCPVDCFYEGER and FMLVINPDECIDCGVCVPDCPIGAIKPESP. [3Fe-4S] cluster contacts are provided by cysteine 9 and cysteine 17. [4Fe-4S] cluster-binding residues include cysteine 21, cysteine 44, cysteine 47, and cysteine 50. Cysteine 54 contributes to the [3Fe-4S] cluster binding site.

The cofactor is [4Fe-4S] cluster. It depends on [3Fe-4S] cluster as a cofactor.

In terms of biological role, ferredoxins are iron-sulfur proteins that transfer electrons in a wide variety of metabolic reactions. The chain is Ferredoxin (fdxA) from Rickettsia conorii (strain ATCC VR-613 / Malish 7).